A 413-amino-acid polypeptide reads, in one-letter code: Multidrug resistance protein MdtA (413 aa).

Positions 1-20 are cleaved as a signal peptide; sequence MKGSNTFRWAIAIGVVVAAA. Disordered regions lie at residues 31–57 and 391–413; these read SPTAAPGVAAQAPHTASAGRRGMRDGP and EPQTTVADEKSPSRHEGQKGARA. Basic and acidic residues predominate over residues 397-413; the sequence is ADEKSPSRHEGQKGARA.

The protein belongs to the membrane fusion protein (MFP) (TC 8.A.1) family. Part of a tripartite efflux system composed of MdtA, MdtB and MdtC.

Its subcellular location is the cell inner membrane. This is Multidrug resistance protein MdtA from Salmonella typhimurium (strain LT2 / SGSC1412 / ATCC 700720).